Reading from the N-terminus, the 362-residue chain is Aspartate-semialdehyde dehydrogenase (362 aa).

Residues Thr15, Gly16, Ala17, Val18, Ser40, Ser43, Leu87, and Asp88 each contribute to the NADP(+) site. The Acyl-thioester intermediate role is filled by Cys154. Gly186 is a binding site for NADP(+). The active-site Proton acceptor is His251. Residue Asn340 coordinates NADP(+).

The protein belongs to the aspartate-semialdehyde dehydrogenase family. As to quaternary structure, homotetramer; dimer of dimers.

The protein localises to the cytoplasm. The protein resides in the cytosol. It is found in the nucleus. The enzyme catalyses L-aspartate 4-semialdehyde + phosphate + NADP(+) = 4-phospho-L-aspartate + NADPH + H(+). The protein operates within amino-acid biosynthesis; L-methionine biosynthesis via de novo pathway; L-homoserine from L-aspartate: step 2/3. It participates in amino-acid biosynthesis; L-threonine biosynthesis; L-threonine from L-aspartate: step 2/5. Functionally, catalyzes the NADPH-dependent formation of L-aspartate 4-semialdehyde (L-ASA) by the reductive dephosphorylation of 4-phospho-L-aspartate. Mediates the second step in the biosynthesis of amino acids that derive from aspartate (the aspartate family of amino acids), including methioinine and threonine, the latter of which is a precursor to isoleucine. This is Aspartate-semialdehyde dehydrogenase from Trichophyton rubrum (strain ATCC MYA-4607 / CBS 118892) (Athlete's foot fungus).